The primary structure comprises 56 residues: Small ribosomal subunit protein uS14 (56 aa).

Ser9 bears the Phosphoserine mark. At Arg12 the chain carries Omega-N-methylarginine. Residues Cys21, Cys24, Cys39, and Cys42 each coordinate Zn(2+). An N6-acetyllysine modification is found at Lys48.

Belongs to the universal ribosomal protein uS14 family. Component of the 40S small ribosomal subunit. The cofactor is Zn(2+).

It is found in the cytoplasm. Its subcellular location is the cytosol. The protein resides in the rough endoplasmic reticulum. In terms of biological role, component of the small ribosomal subunit. The ribosome is a large ribonucleoprotein complex responsible for the synthesis of proteins in the cell. The chain is Small ribosomal subunit protein uS14 (Rps29) from Mus musculus (Mouse).